Reading from the N-terminus, the 338-residue chain is Methionine import ATP-binding protein MetN 2 (338 aa).

The ABC transporter domain maps to 2-242; that stretch reads IEIEKVCVDF…PQHAFTQQLV (241 aa). ATP is bound at residue 39–46; it reads GTSGAGKS.

This sequence belongs to the ABC transporter superfamily. Methionine importer (TC 3.A.1.24) family. In terms of assembly, the complex is composed of two ATP-binding proteins (MetN), two transmembrane proteins (MetI) and a solute-binding protein (MetQ).

Its subcellular location is the cell inner membrane. It catalyses the reaction L-methionine(out) + ATP + H2O = L-methionine(in) + ADP + phosphate + H(+). It carries out the reaction D-methionine(out) + ATP + H2O = D-methionine(in) + ADP + phosphate + H(+). Its function is as follows. Part of the ABC transporter complex MetNIQ involved in methionine import. Responsible for energy coupling to the transport system. The protein is Methionine import ATP-binding protein MetN 2 of Salmonella paratyphi A (strain ATCC 9150 / SARB42).